A 427-amino-acid polypeptide reads, in one-letter code: Glutamate-1-semialdehyde 2,1-aminomutase (427 aa).

Residue lysine 265 is modified to N6-(pyridoxal phosphate)lysine.

Belongs to the class-III pyridoxal-phosphate-dependent aminotransferase family. HemL subfamily. In terms of assembly, homodimer. Pyridoxal 5'-phosphate is required as a cofactor.

It localises to the cytoplasm. The catalysed reaction is (S)-4-amino-5-oxopentanoate = 5-aminolevulinate. It participates in porphyrin-containing compound metabolism; protoporphyrin-IX biosynthesis; 5-aminolevulinate from L-glutamyl-tRNA(Glu): step 2/2. The chain is Glutamate-1-semialdehyde 2,1-aminomutase from Pseudomonas putida (strain GB-1).